A 296-amino-acid polypeptide reads, in one-letter code: 33 kDa chaperonin (296 aa).

2 disulfides stabilise this stretch: C238/C240 and C271/C274.

It belongs to the HSP33 family. Under oxidizing conditions two disulfide bonds are formed involving the reactive cysteines. Under reducing conditions zinc is bound to the reactive cysteines and the protein is inactive.

The protein resides in the cytoplasm. In terms of biological role, redox regulated molecular chaperone. Protects both thermally unfolding and oxidatively damaged proteins from irreversible aggregation. Plays an important role in the bacterial defense system toward oxidative stress. This Clostridium botulinum (strain 657 / Type Ba4) protein is 33 kDa chaperonin.